Here is a 270-residue protein sequence, read N- to C-terminus: MAAVLFALLALALLRAGGASAAAGTVTTSVQSGDSWVQLTCTLNTSAAGVTGHRWLKGKEVVKEDQLQGLHTEHNVTGDDRFGKYSCLFLPKDTGEATLTVDGPPRIKAVKKSEHANEGDSVTLLCKSESFPFVTAWVWYKVADSGDQVIQNGSQSRFFISHSEAQSELHIKDLDLTSDPGEYACNGTSLQGTDAAVVTLRVRSRLAALWPFLGIVAEVLVLVTVIFIYEKRRKPDEVLDDEDAGAAPLKSSGHHVNDDKGKNVRQRNAS.

The N-terminal stretch at M1 to A21 is a signal peptide. The Ig-like C2-type domain maps to A22–G103. The Extracellular segment spans residues A22–A207. Cystine bridges form between C41/C87 and C126/C185. N-linked (GlcNAc...) asparagine glycosylation is found at N44, N75, N152, and N186. The region spanning P105–R203 is the Ig-like V-type domain. A helical transmembrane segment spans residues A208–I228. Topologically, residues Y229–S270 are cytoplasmic. Positions L239–S270 are disordered. S252 carries the post-translational modification Phosphoserine.

Homooligomer. Interacts with VEGFA, KDR/VEGFR2, PPIA/CYPA, SLC1A3, SLC16A12, SLC16A11, ATP1B2, MAG, L1CAM and AJAP1. Interacts with PPIL2; regulates BSG transport to the cell membrane. Interacts with XKR8; promoting its localization at the cell membrane. Interacts with SLC16A3; interaction mediates SLC16A3 targeting to the plasma membrane. Interacts with SLC16A1; interaction mediates SLC16A1 targeting to the plasma membrane. Interacts with SLC16A6; this interaction mediates targeting to the plasma membrane.

The protein localises to the cell membrane. It is found in the endoplasmic reticulum membrane. It localises to the basolateral cell membrane. Functionally, signaling receptor for cyclophilins, essential for PPIA/CYPA and PPIB/CYPB-dependent signaling related to chemotaxis and adhesion of immune cells. Plays an important role in targeting the monocarboxylate transporters SLC16A1/GLUT1, SLC16A3, SLC16A8, SLC16A11 and SLC16A12 to the plasma membrane. Acts as a coreceptor for vascular endothelial growth factor receptor 2 (KDR/VEGFR2) in endothelial cells enhancing its VEGFA-mediated activation and downstream signaling. Promotes angiogenesis through EPAS1/HIF2A-mediated up-regulation of VEGFA and KDR/VEGFR2 in endothelial cells. The protein is Basigin (BSG) of Oryctolagus cuniculus (Rabbit).